The sequence spans 177 residues: Myosin regulatory light chain 2 (177 aa).

Basic residues predominate over residues 1 to 16 (MSRKSGSRSSSKRSKK). The interval 1 to 24 (MSRKSGSRSSSKRSKKSGGGSNVF) is disordered. 6 igE-binding epitope regions span residues 13-30 (RSKKSGGGSNVFDMFTQR), 22-48 (NVFDMFTQRQVAEFKEGFQLMDRDKDG), 49-66 (VIGKTDLRGTFDEIGRIA), 58-90 (TFDEIGRIATDQELDEMLADAPAPINFTMLLNM), 79-99 (PAPINFTMLLNMFAERQTGES), and 118-141 (NIDCDTFRHALMTWGDKFSSQEAD). An EF-hand 1 domain is found at 30 to 65 (RQVAEFKEGFQLMDRDKDGVIGKTDLRGTFDEIGRI). Residues Asp-43, Asp-45, Asp-47, and Asp-54 each contribute to the Ca(2+) site. The 36-residue stretch at 135–170 (FSSQEADDALDQMDIDDGGKIDVQGVIQMLTAGGGD) folds into the EF-hand 2 domain.

Myosin is a hexamer of 2 heavy chains and 4 light chains. As to expression, expressed in tail muscle (at protein level).

This Penaeus vannamei (Whiteleg shrimp) protein is Myosin regulatory light chain 2.